The following is a 324-amino-acid chain: Lipoyl synthase, chloroplastic (324 aa).

Composition is skewed to low complexity over residues methionine 1–alanine 12 and lysine 20–proline 29. Positions methionine 1–proline 30 are disordered. Residues cysteine 58, cysteine 63, cysteine 69, cysteine 86, cysteine 90, cysteine 93, and serine 302 each contribute to the [4Fe-4S] cluster site. A Radical SAM core domain is found at glycine 72 to arginine 291.

It belongs to the radical SAM superfamily. Lipoyl synthase family. Requires [4Fe-4S] cluster as cofactor.

The protein resides in the plastid. It localises to the chloroplast. It carries out the reaction [[Fe-S] cluster scaffold protein carrying a second [4Fe-4S](2+) cluster] + N(6)-octanoyl-L-lysyl-[protein] + 2 oxidized [2Fe-2S]-[ferredoxin] + 2 S-adenosyl-L-methionine + 4 H(+) = [[Fe-S] cluster scaffold protein] + N(6)-[(R)-dihydrolipoyl]-L-lysyl-[protein] + 4 Fe(3+) + 2 hydrogen sulfide + 2 5'-deoxyadenosine + 2 L-methionine + 2 reduced [2Fe-2S]-[ferredoxin]. It functions in the pathway protein modification; protein lipoylation via endogenous pathway; protein N(6)-(lipoyl)lysine from octanoyl-[acyl-carrier-protein]: step 2/2. Its function is as follows. Catalyzes the radical-mediated insertion of two sulfur atoms into the C-6 and C-8 positions of the octanoyl moiety bound to the lipoyl domains of lipoate-dependent enzymes, thereby converting the octanoylated domains into lipoylated derivatives. In Ostreococcus lucimarinus (strain CCE9901), this protein is Lipoyl synthase, chloroplastic.